Here is a 301-residue protein sequence, read N- to C-terminus: Ornithine carbamoyltransferase (301 aa).

Carbamoyl phosphate-binding positions include Ser-53 to Thr-56, Gln-80, Arg-104, and His-131 to Gln-134. Residues Asn-162, Asp-221, and Ser-225–Ile-226 each bind L-ornithine. Carbamoyl phosphate-binding positions include Cys-260–Leu-261 and Arg-288.

This sequence belongs to the aspartate/ornithine carbamoyltransferase superfamily. OTCase family.

The protein localises to the cytoplasm. The enzyme catalyses carbamoyl phosphate + L-ornithine = L-citrulline + phosphate + H(+). It functions in the pathway amino-acid biosynthesis; L-arginine biosynthesis; L-arginine from L-ornithine and carbamoyl phosphate: step 1/3. Its function is as follows. Reversibly catalyzes the transfer of the carbamoyl group from carbamoyl phosphate (CP) to the N(epsilon) atom of ornithine (ORN) to produce L-citrulline. The polypeptide is Ornithine carbamoyltransferase (Cenarchaeum symbiosum (strain A)).